Consider the following 289-residue polypeptide: Release factor glutamine methyltransferase (289 aa).

S-adenosyl-L-methionine-binding positions include 130 to 134 (GTGTG), D153, W182, and N196. Residue 196–199 (NPPY) coordinates substrate.

The protein belongs to the protein N5-glutamine methyltransferase family. PrmC subfamily.

The catalysed reaction is L-glutaminyl-[peptide chain release factor] + S-adenosyl-L-methionine = N(5)-methyl-L-glutaminyl-[peptide chain release factor] + S-adenosyl-L-homocysteine + H(+). Functionally, methylates the class 1 translation termination release factors RF1/PrfA and RF2/PrfB on the glutamine residue of the universally conserved GGQ motif. This is Release factor glutamine methyltransferase from Agrobacterium fabrum (strain C58 / ATCC 33970) (Agrobacterium tumefaciens (strain C58)).